We begin with the raw amino-acid sequence, 473 residues long: tRNA modification GTPase MnmE (473 aa).

(6S)-5-formyl-5,6,7,8-tetrahydrofolate is bound by residues Arg-30, Glu-95, and Arg-134. Positions 230-394 (GVSTVIAGRP…LKLLMASMVE (165 aa)) constitute a TrmE-type G domain. GTP is bound by residues 240–245 (NAGKST), 259–265 (SHMPGTT), and 284–287 (DTAG). Residues Ser-244 and Thr-265 each contribute to the Mg(2+) site. Position 473 (Lys-473) interacts with (6S)-5-formyl-5,6,7,8-tetrahydrofolate.

The protein belongs to the TRAFAC class TrmE-Era-EngA-EngB-Septin-like GTPase superfamily. TrmE GTPase family. As to quaternary structure, homodimer. Heterotetramer of two MnmE and two MnmG subunits. The cofactor is K(+).

The protein resides in the cytoplasm. In terms of biological role, exhibits a very high intrinsic GTPase hydrolysis rate. Involved in the addition of a carboxymethylaminomethyl (cmnm) group at the wobble position (U34) of certain tRNAs, forming tRNA-cmnm(5)s(2)U34. The sequence is that of tRNA modification GTPase MnmE from Chlorobium luteolum (strain DSM 273 / BCRC 81028 / 2530) (Pelodictyon luteolum).